A 269-amino-acid chain; its full sequence is MRLEIENGLEFVCDPFLNERGKIFFLHAFTGNITNKLSFRTHFKDYSFYGINFPGHGNSVIHNQSELDFNFWIKLVQQFFNKYQLKNVVLFGHSIGGGLAIALTQVLTKEQIKGIILEAPLNPGIRATPPSIISALVPDTNEDFEAVQRALIYNIEQRFGANFKDFCAKQKQKMIQKYAPLKVMLQPEQAEQRLQLIDAAFKRLSYPTLWIHGQEDGIVRYLPSKAYLESLHNPLIELVGLSNTAHTTFFEQPQQFLQLVEQFLNKLNK.

His-27 is a catalytic residue. The active-site Charge relay system is the Ser-94.

It belongs to the lipase/esterase LIP3/BchO family.

The protein is Putative esterase/lipase 1 of Mycoplasma pneumoniae (strain ATCC 29342 / M129 / Subtype 1) (Mycoplasmoides pneumoniae).